We begin with the raw amino-acid sequence, 330 residues long: MAGWAGAELSVLNPLRALWLLLAAAFLLALLLQLAPARLLPSCALFQDLIRYGKTKQSGSRRPAVCRAFDVPKRYFSHFYVVSVLWNGSLLWFLSQSLFLGAPFPSWLWALLRTLGVTQFQALGMESKASRIQGKKLALSTFLVLVFLWVHSLRRLFECFYVSVFSNTAIHVVQYCFGLVYYVLVGLTVLSQVPMNDKNVYALGKNLLLQARWFHILGMMMFFWSSAHQYKCHVILSNLRRNKKGVVIHCQHRIPFGDWFEYVSSANYLAELMIYISMAVTFGLHNVTWWLVVTYVFFSQALSAFFNHRFYKSTFVSYPKHRKAFLPFLF.

Over 1-16 (MAGWAGAELSVLNPLR) the chain is Cytoplasmic. Residues 17–37 (ALWLLLAAAFLLALLLQLAPA) traverse the membrane as a helical segment. Topologically, residues 38–89 (RLLPSCALFQDLIRYGKTKQSGSRRPAVCRAFDVPKRYFSHFYVVSVLWNGS) are lumenal. The helical transmembrane segment at 90–110 (LLWFLSQSLFLGAPFPSWLWA) threads the bilayer. Residues 111–136 (LLRTLGVTQFQALGMESKASRIQGKK) lie on the Cytoplasmic side of the membrane. A helical membrane pass occupies residues 137–157 (LALSTFLVLVFLWVHSLRRLF). Residues 158-169 (ECFYVSVFSNTA) are Lumenal-facing. Residues 170–190 (IHVVQYCFGLVYYVLVGLTVL) traverse the membrane as a helical segment. The Cytoplasmic segment spans residues 191–206 (SQVPMNDKNVYALGKN). A helical membrane pass occupies residues 207–227 (LLLQARWFHILGMMMFFWSSA). The Lumenal segment spans residues 228 to 277 (HQYKCHVILSNLRRNKKGVVIHCQHRIPFGDWFEYVSSANYLAELMIYIS). Residues 278-298 (MAVTFGLHNVTWWLVVTYVFF) form a helical membrane-spanning segment. At 299–330 (SQALSAFFNHRFYKSTFVSYPKHRKAFLPFLF) the chain is on the cytoplasmic side.

This sequence belongs to the steroid 5-alpha reductase family. Polyprenal reductase subfamily. As to expression, expressed in the 2 tissues tested i.e. testis and liver.

It localises to the endoplasmic reticulum membrane. It catalyses the reaction a di-trans,poly-cis-dolichal + NADP(+) = a di-trans,poly-cis-polyprenal + NADPH + H(+). The enzyme catalyses a 3-oxo-5alpha-steroid + NADP(+) = a 3-oxo-Delta(4)-steroid + NADPH + H(+). The catalysed reaction is androst-4-ene-3,17-dione + NADPH + H(+) = 5alpha-androstan-3,17-dione + NADP(+). It carries out the reaction 17beta-hydroxy-5alpha-androstan-3-one + NADP(+) = testosterone + NADPH + H(+). It participates in protein modification; protein glycosylation. Plays a key role in early steps of protein N-linked glycosylation by being involved in the conversion of polyprenol into dolichol. Acts as a polyprenal reductase that mediates the reduction of polyprenal into dolichal in a NADP-dependent mechanism. Dolichols are required for the synthesis of dolichol-linked monosaccharides and the oligosaccharide precursor used for N-glycosylation. Also able to convert testosterone (T) into 5-alpha-dihydrotestosterone (DHT). This Rattus norvegicus (Rat) protein is Polyprenal reductase.